The primary structure comprises 344 residues: Arginine N-succinyltransferase (344 aa).

Leu-125 serves as a coordination point for succinyl-CoA. The Proton donor role is filled by His-229.

Belongs to the arginine N-succinyltransferase family.

It catalyses the reaction succinyl-CoA + L-arginine = N(2)-succinyl-L-arginine + CoA + H(+). The protein operates within amino-acid degradation; L-arginine degradation via AST pathway; L-glutamate and succinate from L-arginine: step 1/5. Functionally, catalyzes the transfer of succinyl-CoA to arginine to produce N(2)-succinylarginine. This Escherichia coli (strain UTI89 / UPEC) protein is Arginine N-succinyltransferase.